The following is a 341-amino-acid chain: uncharacterized protein (341 aa).

Basic residues predominate over residues 1–12; that stretch reads NSRIAHVPKSKK. 2 disordered regions span residues 1-21 and 291-317; these read NSRIAHVPKSKKPLNSASPRF and KARMQMSGKNYQQRPSRTTSPAVNPED. The segment covering 297–312 has biased composition (polar residues); it reads SGKNYQQRPSRTTSPA.

This is an uncharacterized protein from Lachancea kluyveri (strain ATCC 58438 / CBS 3082 / BCRC 21498 / NBRC 1685 / JCM 7257 / NCYC 543 / NRRL Y-12651) (Yeast).